A 369-amino-acid polypeptide reads, in one-letter code: UDP-N-acetylenolpyruvoylglucosamine reductase (369 aa).

Positions 29 to 202 (VGPIARRVIT…LEVEFALDPS (174 aa)) constitute an FAD-binding PCMH-type domain. Residue arginine 176 is part of the active site. The active-site Proton donor is serine 257. The active site involves glutamate 361.

Belongs to the MurB family. Requires FAD as cofactor.

It localises to the cytoplasm. It carries out the reaction UDP-N-acetyl-alpha-D-muramate + NADP(+) = UDP-N-acetyl-3-O-(1-carboxyvinyl)-alpha-D-glucosamine + NADPH + H(+). Its pathway is cell wall biogenesis; peptidoglycan biosynthesis. Its function is as follows. Cell wall formation. This chain is UDP-N-acetylenolpyruvoylglucosamine reductase, found in Mycobacterium tuberculosis (strain ATCC 25177 / H37Ra).